The primary structure comprises 365 residues: uncharacterized protein (365 aa).

The next 6 helical transmembrane spans lie at 3 to 23 (MDTSKVILIVAIIIWIILYSI), 60 to 80 (IGIISIPICVILGFFMLLNII), 100 to 120 (VFLFGDVIPWIPGIIALLIAI), 141 to 161 (SGILLLLGLPLGAFVELGDEF), 171 to 191 (AIASAGPLANLIIFLTSIPLL), and 280 to 300 (TALFINTIYWTYWFNFLLALF).

The protein to S.solfataricus C04034.

The protein resides in the cell membrane. This is an uncharacterized protein from Methanocaldococcus jannaschii (strain ATCC 43067 / DSM 2661 / JAL-1 / JCM 10045 / NBRC 100440) (Methanococcus jannaschii).